The chain runs to 375 residues: Nucleosome assembly protein 1-like 4 (375 aa).

The tract at residues 1–31 (MADHSFSDGVPSDSVEAAKNASNTEKLTDQV) is disordered. Alanine 2 carries the post-translational modification N-acetylalanine. Phosphoserine is present on residues serine 5, serine 7, and serine 12. Polar residues predominate over residues 20 to 31 (NASNTEKLTDQV). Position 51 is a phosphothreonine (threonine 51). A phosphoserine mark is found at serine 53 and serine 54. Phosphothreonine is present on threonine 58. Lysine 105 is subject to N6-acetyllysine. The segment at 116–137 (PTDAESEWHSENEEEEKLAGDM) is disordered. The segment covering 121–137 (SEWHSENEEEEKLAGDM) has biased composition (basic and acidic residues). Serine 125 bears the Phosphoserine mark. Position 146 is an N6-acetyllysine (lysine 146). The short motif at 265–271 (IKKKQKH) is the Nuclear localization signal element. Phosphoserine is present on serine 304. The interval 339-375 (AIEDDDNFEEGEEGEEEELEGDEEGEDEDDAEINPKV) is disordered.

This sequence belongs to the nucleosome assembly protein (NAP) family. As to quaternary structure, interacts with core (H2A, CD2APH2B, H3, H4) and linker (H1) histones. (Microbial infection) Interacts with Chikungunya virus non-structural protein 3 (via C-terminus). In terms of processing, phosphorylated at the G0/G1 boundary but it is not phosphorylated in S-phase. Phosphorylated protein remains in the cytoplasm in a complex with histones during the G0/G1 transition, whereas dephosphorylation triggers its transport into the nucleus at the G1/S-boundary. Post-translationally, polyglutamylated by TTLL4, a modification that occurs exclusively on glutamate residues and results in polyglutamate chains on the gamma-carboxyl group. Some residues may also be monoglycylated but not polyglycylated due to the absence of functional TTLL10 in human. As to expression, ubiquitous. Biallelically expressed in fetal and adult tissues. Highest levels in testis.

The protein localises to the nucleus. It localises to the cytoplasm. Its function is as follows. Acts as a histone chaperone in nucleosome assembly. This is Nucleosome assembly protein 1-like 4 from Homo sapiens (Human).